The following is a 367-amino-acid chain: Protein-glutamate methylesterase/protein-glutamine glutaminase 1 (367 aa).

A Response regulatory domain is found at 9–126 (KVLCVDDSAL…RDGMLDYSEK (118 aa)). A 4-aspartylphosphate modification is found at aspartate 60. Residues 168 to 360 (LVSTEKLIIV…RRIMARLASM (193 aa)) form the CheB-type methylesterase domain. Residues serine 180, histidine 206, and aspartate 302 contribute to the active site.

The protein belongs to the CheB family. Phosphorylated by CheA. Phosphorylation of the N-terminal regulatory domain activates the methylesterase activity.

Its subcellular location is the cytoplasm. The enzyme catalyses [protein]-L-glutamate 5-O-methyl ester + H2O = L-glutamyl-[protein] + methanol + H(+). The catalysed reaction is L-glutaminyl-[protein] + H2O = L-glutamyl-[protein] + NH4(+). In terms of biological role, involved in chemotaxis. Part of a chemotaxis signal transduction system that modulates chemotaxis in response to various stimuli. Catalyzes the demethylation of specific methylglutamate residues introduced into the chemoreceptors (methyl-accepting chemotaxis proteins or MCP) by CheR. Also mediates the irreversible deamidation of specific glutamine residues to glutamic acid. This chain is Protein-glutamate methylesterase/protein-glutamine glutaminase 1, found in Burkholderia pseudomallei (strain K96243).